Reading from the N-terminus, the 455-residue chain is Elongation factor Tu, mitochondrial (455 aa).

The N-terminal 46 residues, 1–46, are a transit peptide targeting the mitochondrion; it reads MTTMAAATLLRATPHFSGLAAGRTFLLQGLLRLLKAPALPLLCRGL. The region spanning 58–254 is the tr-type G domain; the sequence is KPHVNVGTIG…AVDTYIPVPA (197 aa). The G1 stretch occupies residues 67-74; sequence GHVDHGKT. The GTP site is built by Asp-70, Gly-72, Lys-73, Thr-74, and Thr-75. Thr-74 serves as a coordination point for Mg(2+). The residue at position 82 (Lys-82) is an N6-acetyllysine. Residue Lys-91 is modified to N6-acetyllysine; alternate. The residue at position 91 (Lys-91) is an N6-succinyllysine; alternate. The G2 stretch occupies residues 108 to 112; that stretch reads GITIN. Positions 129 to 132 are G3; it reads DCPG. The GTP site is built by Asn-184, Asp-187, Ser-222, Ala-223, and Leu-224. Residues 184–187 are G4; it reads NKAD. The interval 222-224 is G5; the sequence is SAL. Lys-237 carries the N6-succinyllysine modification. Position 259 is an N6-acetyllysine (Lys-259). Residue Thr-281 is modified to Phosphothreonine. An N6-succinyllysine modification is found at Lys-289. Ser-315 bears the Phosphoserine mark. Residues Lys-364 and Lys-421 each carry the N6-acetyllysine modification.

It belongs to the TRAFAC class translation factor GTPase superfamily. Classic translation factor GTPase family. EF-Tu/EF-1A subfamily. In terms of assembly, interacts with NLRX1. Interacts with ATG16L1. (Microbial infection) Interacts with human parainfluenza virus 3 matrix protein; this interaction inhibits RLR-mediated type I interferon production while promoting autophagy. As to quaternary structure, (Microbial infection) Interacts with Hantaan hantavirus glycoprotein N; this interaction contributes to the virus-induced degradation of mitochondria by autophagy, which leads to degradation of MAVS and inhibition of type I interferon (IFN) responses.

It localises to the mitochondrion. The catalysed reaction is GTP + H2O = GDP + phosphate + H(+). GTP hydrolase that promotes the GTP-dependent binding of aminoacyl-tRNA to the A-site of ribosomes during protein biosynthesis. Also plays a role in the regulation of autophagy and innate immunity. Recruits ATG5-ATG12 and NLRX1 at mitochondria and serves as a checkpoint of the RIGI-MAVS pathway. In turn, inhibits RLR-mediated type I interferon while promoting autophagy. The polypeptide is Elongation factor Tu, mitochondrial (TUFM) (Homo sapiens (Human)).